We begin with the raw amino-acid sequence, 343 residues long: Aspartate carbamoyltransferase catalytic subunit (343 aa).

The segment covering 1–14 (MTTDTTGRTGNPAA) has biased composition (polar residues). Positions 1 to 20 (MTTDTTGRTGNPAATASPDR) are disordered. Carbamoyl phosphate is bound by residues arginine 91 and threonine 92. An L-aspartate-binding site is contributed by lysine 119. Carbamoyl phosphate-binding residues include arginine 141, histidine 171, and glutamine 174. Residues arginine 204 and arginine 259 each contribute to the L-aspartate site. 2 residues coordinate carbamoyl phosphate: glycine 300 and proline 301.

It belongs to the aspartate/ornithine carbamoyltransferase superfamily. ATCase family. Heterododecamer (2C3:3R2) of six catalytic PyrB chains organized as two trimers (C3), and six regulatory PyrI chains organized as three dimers (R2).

The catalysed reaction is carbamoyl phosphate + L-aspartate = N-carbamoyl-L-aspartate + phosphate + H(+). It participates in pyrimidine metabolism; UMP biosynthesis via de novo pathway; (S)-dihydroorotate from bicarbonate: step 2/3. Catalyzes the condensation of carbamoyl phosphate and aspartate to form carbamoyl aspartate and inorganic phosphate, the committed step in the de novo pyrimidine nucleotide biosynthesis pathway. The protein is Aspartate carbamoyltransferase catalytic subunit of Burkholderia lata (strain ATCC 17760 / DSM 23089 / LMG 22485 / NCIMB 9086 / R18194 / 383).